We begin with the raw amino-acid sequence, 78 residues long: D-alanyl carrier protein (78 aa).

The Carrier domain occupies 1 to 78 (MEFREQVLDL…KIVEALEELR (78 aa)). Position 36 is an O-(pantetheine 4'-phosphoryl)serine (S36).

The protein belongs to the DltC family. Post-translationally, 4'-phosphopantetheine is transferred from CoA to a specific serine of apo-DCP.

It localises to the cytoplasm. It functions in the pathway cell wall biogenesis; lipoteichoic acid biosynthesis. Its function is as follows. Carrier protein involved in the D-alanylation of lipoteichoic acid (LTA). The loading of thioester-linked D-alanine onto DltC is catalyzed by D-alanine--D-alanyl carrier protein ligase DltA. The DltC-carried D-alanyl group is further transferred to cell membrane phosphatidylglycerol (PG) by forming an ester bond, probably catalyzed by DltD. D-alanylation of LTA plays an important role in modulating the properties of the cell wall in Gram-positive bacteria, influencing the net charge of the cell wall. The sequence is that of D-alanyl carrier protein from Staphylococcus epidermidis (strain ATCC 35984 / DSM 28319 / BCRC 17069 / CCUG 31568 / BM 3577 / RP62A).